Reading from the N-terminus, the 147-residue chain is MVHFTAEEKAAITSIWDKVDLEKVGGETLGRLLIVYPWTQRFFDKFGNLSSAQAIMGNPRIKAHGKKVLTSLGLAVKNMDNLKETFAHLSELHCDKLHADPENFKLLGNMLVIVLSSYFGKEFTAEAQAAWQKLVVGVATALSHKYH.

Residues 3 to 147 (HFTAEEKAAI…VATALSHKYH (145 aa)) form the Globin domain. Heme b contacts are provided by histidine 64 and histidine 93.

It belongs to the globin family. Heterotetramer of two alpha chains and two beta chains. As to expression, red blood cells.

In terms of biological role, this is a minor early embryonic beta chain. The sequence is that of Hemoglobin subunit beta-H0 (Hbb-bh0) from Mus musculus (Mouse).